The following is a 739-amino-acid chain: Poly(A) polymerase alpha (739 aa).

Low complexity predominate over residues 1 to 17; that stretch reads MPFPVTTQGSQQTQPPQ. Residues 1 to 23 are disordered; that stretch reads MPFPVTTQGSQQTQPPQKHYGIT. 2 positions are modified to phosphoserine: serine 10 and serine 24. ATP-binding positions include 100-102, threonine 109, 113-115, aspartate 167, lysine 228, tyrosine 237, and 246-247; these read FGS, DID, and GV. The Mg(2+) site is built by aspartate 113, aspartate 115, and aspartate 167. Residues lysine 444, lysine 445, lysine 506, and lysine 507 each participate in a glycyl lysine isopeptide (Lys-Gly) (interchain with G-Cter in SUMO) cross-link. The short motif at 490-507 is the Nuclear localization signal 1 element; the sequence is RKQLHQLLPSHVLQKKKK. 2 disordered regions span residues 501-565 and 580-700; these read VLQK…AVTA and QINS…TIQT. Positions 508-643 are ser/Thr-rich; the sequence is HSTEGVKLTP…AKIPNPIVGV (136 aa). Positions 518-534 are enriched in low complexity; that stretch reads LNDSSLDLSMDSDNSMS. The segment covering 535–557 has biased composition (polar residues); that stretch reads VPSPTSAMKTSPLNSSGSSQGRN. At serine 537 the chain carries Phosphoserine; by MAPK. Serine 558 bears the Phosphoserine mark. Residues 583–594 show a composition bias toward low complexity; it reads SSESSGGTSSES. Over residues 595-604 the composition is skewed to polar residues; the sequence is IPQTATQPAI. Over residues 611 to 620 the composition is skewed to low complexity; sequence TVSRVVSSTR. An N6-acetyllysine mark is found at lysine 635 and lysine 644. Positions 644 to 659 match the Nuclear localization signal 2 motif; sequence KRTSSPHKEESPKKTK. Basic and acidic residues-rich tracts occupy residues 649-660 and 676-686; these read PHKEESPKKTKT and GHDKTETKEQL. Positions 671–739 are required for interaction with NUDT21; it reads CLALSGHDKT…KNSIKLRLNR (69 aa). Over residues 688–700 the composition is skewed to low complexity; that stretch reads TETSTTQSETIQT. At lysine 730 the chain carries N6-acetyllysine; alternate. Lysine 730 is covalently cross-linked (Glycyl lysine isopeptide (Lys-Gly) (interchain with G-Cter in SUMO); alternate). The residue at position 732 (serine 732) is a Phosphoserine. Lysine 734 carries the N6-acetyllysine; alternate modification. Lysine 734 participates in a covalent cross-link: Glycyl lysine isopeptide (Lys-Gly) (interchain with G-Cter in SUMO); alternate.

This sequence belongs to the poly(A) polymerase family. In terms of assembly, monomer. Found in a complex with CPSF1, FIP1L1 and PAPOLA. Interacts with AHCYL1 and FIP1L1; the interaction with AHCYL1 seems to increase interaction with FIP1L1. Interacts with NUDT21; the interaction is diminished by acetylation. Interacts with KPNB1; the interaction promotes PAP nuclear import and is inhibited by acetylation of PAP. Mg(2+) is required as a cofactor. Requires Mn(2+) as cofactor. Post-translationally, polysumoylated. Varying sumoylation depending on tissue- and cell-type. Highly sumoylated in bladder and NIH 3T3 cells. Sumoylation is required for nuclear localization and enhances PAP stability. Desumoylated by SENP1. Inhibits polymerase activity. Hyperphosphorylation on multiple CDK2 consensus and non-consensus sites in the C-terminal Ser/Thr-rich region represses PAP activity in late M-phase. Phosphorylation/dephosphorylation may regulate the interaction between PAP and CPSF. In terms of processing, acetylated in the C-terminus. Acetylation decreases interaction with NUDT21 and KPNB1, and inhibits nuclear localization through inhibiting binding to the importin alpha/beta complex.

It is found in the nucleus. The catalysed reaction is RNA(n) + ATP = RNA(n)-3'-adenine ribonucleotide + diphosphate. Polymerase that creates the 3'-poly(A) tail of mRNA's. Also required for the endoribonucleolytic cleavage reaction at some polyadenylation sites. May acquire specificity through interaction with a cleavage and polyadenylation specificity factor (CPSF) at its C-terminus. The chain is Poly(A) polymerase alpha (PAPOLA) from Bos taurus (Bovine).